We begin with the raw amino-acid sequence, 144 residues long: L-fucose mutarotase (144 aa).

Residue H22 is the Proton donor of the active site. Residues D30, R109, and 131 to 133 contribute to the substrate site; that span reads YGN.

This sequence belongs to the RbsD / FucU family. FucU mutarotase subfamily. In terms of assembly, homodecamer.

It is found in the cytoplasm. The catalysed reaction is alpha-L-fucose = beta-L-fucose. The protein operates within carbohydrate metabolism; L-fucose metabolism. Its function is as follows. Involved in the anomeric conversion of L-fucose. This chain is L-fucose mutarotase, found in Actinobacillus pleuropneumoniae serotype 5b (strain L20).